The following is a 1798-amino-acid chain: Laminin subunit beta-2 (1798 aa).

A signal peptide spans 1 to 32 (MELTSRERGRGQPLPWELRLGLLLSVLAATLA). In terms of domain architecture, Laminin N-terminal spans 43 to 282 (SRGSCYPATG…ALYELVVRGN (240 aa)). Asn248 carries N-linked (GlcNAc...) asparagine glycosylation. Intrachain disulfides connect Cys283/Cys292, Cys285/Cys310, Cys312/Cys321, Cys324/Cys344, Cys347/Cys356, Cys349/Cys374, Cys377/Cys386, Cys389/Cys407, Cys410/Cys423, Cys412/Cys438, Cys440/Cys449, Cys452/Cys467, Cys470/Cys484, Cys472/Cys491, Cys493/Cys502, Cys505/Cys519, Cys522/Cys534, Cys524/Cys541, and Cys543/Cys552. Laminin EGF-like domains follow at residues 283 to 346 (CFCY…ACRK), 347 to 409 (CECH…VCRS), 410 to 469 (CDCD…GCRR), and 470 to 521 (CQCN…GCRP). Asn368 carries N-linked (GlcNAc...) asparagine glycosylation. One can recognise a Laminin EGF-like 5; truncated domain in the interval 522–552 (CDCDVGGALDPQCDEGTGQCHCRQHMVGRRC). The 217-residue stretch at 561–777 (RPFLDHLIWE…LLISLSTLIY (217 aa)) folds into the Laminin IV type B domain. Intrachain disulfides connect Cys783–Cys795, Cys785–Cys802, Cys804–Cys813, Cys816–Cys828, Cys831–Cys843, Cys833–Cys850, Cys852–Cys861, Cys864–Cys874, Cys877–Cys886, Cys879–Cys893, Cys896–Cys905, Cys908–Cys924, Cys927–Cys943, Cys929–Cys954, Cys956–Cys965, Cys968–Cys983, Cys986–Cys1000, Cys988–Cys1007, Cys1010–Cys1019, Cys1022–Cys1035, Cys1038–Cys1058, Cys1040–Cys1065, Cys1067–Cys1076, Cys1079–Cys1092, Cys1095–Cys1107, Cys1097–Cys1114, Cys1116–Cys1125, Cys1128–Cys1140, Cys1143–Cys1155, Cys1145–Cys1162, Cys1164–Cys1173, and Cys1176–Cys1187. 8 Laminin EGF-like domains span residues 783-830 (CQCN…GCQA), 831-876 (CQCS…SCRP), 877-926 (CVCN…QCRP), 927-985 (CPCP…RCQL), 986-1037 (CECS…SCHR), 1038-1094 (CTCN…GCQP), 1095-1142 (CACH…QCHA), and 1143-1189 (CDCD…ACHP). N-linked (GlcNAc...) asparagine glycosylation occurs at Asn1085. The domain II stretch occupies residues 1190-1409 (CHACFGDWDR…LSLTDINELV (220 aa)). Asn1249, Asn1308, and Asn1348 each carry an N-linked (GlcNAc...) asparagine glycan. Positions 1253-1319 (ASTAQLVEAT…TLRQLDQHLD (67 aa)) form a coiled coil. Positions 1338 to 1364 (SQSAEAERRANTSALAVPSPVSNSASA) are disordered. The span at 1350-1363 (SALAVPSPVSNSAS) shows a compositional bias: low complexity. A domain alpha region spans residues 1410–1442 (CGAPGDAPCATSPCGGAGCRDEDGQPRCGGLSC). Positions 1443 to 1798 (NGAAATADLA…LQVQIYNTCQ (356 aa)) are domain I. Positions 1472–1526 (SILSRVAETRRQASEAQQRAQAALDKANASRGQVEQANQELQELIQSVKDFLNQE) form a coiled coil. A glycan (N-linked (GlcNAc...) asparagine) is linked at Asn1499. Position 1532 is a phosphoserine; by FAM20C (Ser1532). A coiled-coil region spans residues 1577-1790 (VGDVRRAEQL…RSVLQAINLQ (214 aa)).

In terms of assembly, laminin is a complex glycoprotein, consisting of three different polypeptide chains (alpha, beta, gamma), which are bound to each other by disulfide bonds into a cross-shaped molecule comprising one long and three short arms with globules at each end. Beta-2 is a subunit of laminin-3 (laminin-121 or S-laminin), laminin-4 (laminin-221 or S-merosin), laminin-7 (laminin-321 or KS-laminin), laminin-9 (laminin-421), laminin-11 (laminin-521), laminin-14 (laminin-423) and laminin-15 (laminin-523).

It is found in the secreted. Its subcellular location is the extracellular space. It localises to the extracellular matrix. The protein resides in the basement membrane. Its function is as follows. Binding to cells via a high affinity receptor, laminin is thought to mediate the attachment, migration and organization of cells into tissues during embryonic development by interacting with other extracellular matrix components. The chain is Laminin subunit beta-2 (LAMB2) from Homo sapiens (Human).